We begin with the raw amino-acid sequence, 141 residues long: Cystatin (141 aa).

Residues 1–26 form the signal peptide; the sequence is MVRSQLPVAAPLRLLCALLLLPSATM. Residues 29–129 enclose the Cystatin domain; it reads GGLSPRSVTD…CHFQVWSRPW (101 aa). Positions 73–77 match the Secondary area of contact motif; sequence QVVSG. Intrachain disulfides connect cysteine 91-cysteine 107 and cysteine 120-cysteine 140.

It belongs to the cystatin family. As to expression, expressed at a low level by the venom gland (at protein level).

Its subcellular location is the secreted. In terms of biological role, inhibits various C1 cysteine proteases including cathepsin L, papain and cathepsin B. This protein has no toxic activity and its function in the venom is unknown. It may play a role as a housekeeping or regulatory protein. The sequence is that of Cystatin from Micropechis ikaheca (New Guinean small-eyed snake).